Reading from the N-terminus, the 723-residue chain is uncharacterized protein (723 aa).

The segment covering 1-12 (MTGKKKNRHQKK) has biased composition (basic residues). Disordered regions lie at residues 1-166 (MTGK…EKEI), 181-212 (IKRK…SGWG), 268-289 (LPLS…DNDN), and 391-455 (KNKS…NTST). Over residues 30–42 (DETTTTTTTTTTT) the composition is skewed to low complexity. 2 stretches are compositionally biased toward basic and acidic residues: residues 45–129 (EETK…KTDD) and 149–166 (TDIK…EKEI). Residues 53–173 (IVENKDEDKK…KEIEDPNKKY (121 aa)) are a coiled coil. A compositionally biased stretch (basic residues) spans 181 to 190 (IKRKKEKKVK). The span at 193-204 (PVQPTPPVPAPA) shows a compositional bias: pro residues. Acidic residues predominate over residues 272-288 (DTEDSDNDNDNGGDDND). Over residues 397-455 (DENNNNNNNNNQQQPQQQQTTSPTLSTSPTSPKSPTTTTTNTTTTTTTNTNNNNNNTST) the composition is skewed to low complexity.

This is an uncharacterized protein from Dictyostelium discoideum (Social amoeba).